The chain runs to 548 residues: Glucose-6-phosphate isomerase (548 aa).

Glutamate 355 functions as the Proton donor in the catalytic mechanism. Residues histidine 386 and lysine 514 contribute to the active site.

Belongs to the GPI family.

It localises to the cytoplasm. The enzyme catalyses alpha-D-glucose 6-phosphate = beta-D-fructose 6-phosphate. Its pathway is carbohydrate biosynthesis; gluconeogenesis. It functions in the pathway carbohydrate degradation; glycolysis; D-glyceraldehyde 3-phosphate and glycerone phosphate from D-glucose: step 2/4. In terms of biological role, catalyzes the reversible isomerization of glucose-6-phosphate to fructose-6-phosphate. This Proteus mirabilis (strain HI4320) protein is Glucose-6-phosphate isomerase.